Reading from the N-terminus, the 503-residue chain is Sodium/hydrogen exchanger 3 (503 aa).

Residues 1-22 (MVIGLSTMLEKTEALFASDHAS) lie on the Cytoplasmic side of the membrane. A helical membrane pass occupies residues 23-43 (VVSMNLFVALLCACIVLGHLL). Residues 44–51 (EETRWMNE) are Vacuolar-facing. Residue Asn50 is glycosylated (N-linked (GlcNAc...) asparagine). Residues 52 to 72 (SITALIIGSCTGIVILLISGG) traverse the membrane as a helical segment. Over 73-76 (KSSR) the chain is Cytoplasmic. The segment at residues 77-97 (ILVFSEDLFFIYLLPPIIFNA) is an intramembrane region (helical). Residues 98–109 (GFQVKKKQFFRN) are Cytoplasmic-facing. Residues 110-130 (FMTIMLFGAIGTLISFVIISF) form a helical membrane-spanning segment. Topologically, residues 131-138 (GAKHLFEK) are vacuolar. The helical transmembrane segment at 139–159 (MNIGDLTIADYLAIGAIFSAT) threads the bilayer. Residues 160-174 (DSVCTLQVLNQDETP) are Cytoplasmic-facing. A helical transmembrane segment spans residues 175 to 195 (LLYSLVFGEGVVNDATSVVLF). Residues 196-219 (NAIQRFDLTNINSAIALEFAGNFF) are Vacuolar-facing. A helical membrane pass occupies residues 220 to 240 (YLFILSTALGVAAGLLSAFVI). Topologically, residues 241-265 (KKLYIGRHSTDREVALMMLLAYLSY) are cytoplasmic. The helical transmembrane segment at 266–286 (MLAELFHLSSILTVFFCGIVM) threads the bilayer. Over 287–305 (SHYTWHNVTDKSKVTTKHT) the chain is Vacuolar. A glycan (N-linked (GlcNAc...) asparagine) is linked at Asn293. A helical membrane pass occupies residues 306–326 (FAAMSFLAEIFIFLYVGMDAL). At 327 to 345 (DIEKWDVVRNSPGQSIGVS) the chain is on the cytoplasmic side. A helical membrane pass occupies residues 346-366 (SILLGLILLGRAAFVFPLSFL). The Vacuolar segment spans residues 367-383 (SNLTKSSPDEKIDLKKQ). A glycan (N-linked (GlcNAc...) asparagine) is linked at Asn368. A helical transmembrane segment spans residues 384 to 406 (VTIWWAGLMRGAVSMALAYNQFT). Topologically, residues 407-416 (TSGHTKVLGN) are cytoplasmic. The helical transmembrane segment at 417–437 (AIMITSTITVVLFSTVVFGLL) threads the bilayer. Residues 438–503 (TKPLVKHLQP…FWKSPSRFTH (66 aa)) lie on the Vacuolar side of the membrane.

This sequence belongs to the monovalent cation:proton antiporter 1 (CPA1) transporter (TC 2.A.36) family. Expressed in roots.

The protein resides in the vacuole membrane. The enzyme catalyses Na(+)(in) + H(+)(out) = Na(+)(out) + H(+)(in). The catalysed reaction is K(+)(in) + H(+)(out) = K(+)(out) + H(+)(in). Its function is as follows. May act in low affinity electroneutral exchange of protons for cations such as Na(+) or K(+) across membranes. May also exchange Li(+) and Cs(+) with a lower affinity. This is Sodium/hydrogen exchanger 3 (NHX3) from Arabidopsis thaliana (Mouse-ear cress).